A 428-amino-acid chain; its full sequence is Immunoglobulin superfamily member 11 (428 aa).

Positions 1–22 are cleaved as a signal peptide; the sequence is MTRRRSAPASWLLVSLLGVATS. One can recognise an Ig-like V-type domain in the interval 23 to 136; sequence LEVSESPGSV…DRGGRNIGVT (114 aa). Residues 23–240 lie on the Extracellular side of the membrane; sequence LEVSESPGSV…QVISPQPRSV (218 aa). Disulfide bonds link Cys-44–Cys-120 and Cys-165–Cys-215. An N-linked (GlcNAc...) asparagine glycan is attached at Asn-102. One can recognise an Ig-like C2-type domain in the interval 144 to 234; that stretch reads PSAPQCQIQG…TCLLDLQVIS (91 aa). A helical transmembrane segment spans residues 241–261; sequence GVIAGAVGTGAVLIVICLALI. Residues 262–428 are Cytoplasmic-facing; the sequence is SGAFFYWRSK…PAQSRAGSLV (167 aa). Arg-375 bears the Omega-N-methylarginine mark. Polar residues predominate over residues 376-389; sequence GSSPQVLPRNNGSV. The disordered stretch occupies residues 376-396; sequence GSSPQVLPRNNGSVSRKPWPQ.

In terms of processing, N-glycosylated. In terms of tissue distribution, highly expressed in testis and detected in kidney and adrenal gland. In brain, expressed in commissure fibers of the corpus callosum and pyramidal cell layers of the dentate gyrus and hippocampus where it is probably expressed by both neurons and glial cells.

The protein resides in the cell membrane. Functionally, functions as a cell adhesion molecule through homophilic interaction. Stimulates cell growth. The chain is Immunoglobulin superfamily member 11 (Igsf11) from Mus musculus (Mouse).